Reading from the N-terminus, the 453-residue chain is Ribosome biogenesis protein SSF1 (453 aa).

The span at 1 to 11 (MAKRRQKKRTH) shows a compositional bias: basic residues. 3 disordered regions span residues 1–22 (MAKR…EQGI), 275–324 (KAKH…PRKK), and 374–453 (KMRL…SEVE). In terms of domain architecture, Brix spans 26-348 (MVIRVGQTSL…LVKIEEGICS (323 aa)). Over residues 288–300 (PVEKKDNKEREKE) the composition is skewed to basic and acidic residues. T301 is modified (phosphothreonine). Basic and acidic residues predominate over residues 374 to 398 (KMRLKEQRKKEQEENIAKKKAVKDA). The span at 399–409 (KKQRKLERRKA) shows a compositional bias: basic residues. Over residues 410–423 (RAAEGGEGQGKDDA) the composition is skewed to basic and acidic residues. A compositionally biased stretch (acidic residues) spans 442-453 (EDLDSDLFSEVE).

As to quaternary structure, part of a complex that includes BRX1, RPF1, RPF2 and SSF1 or SSF2.

It is found in the nucleus. It localises to the nucleolus. Functionally, required for biogenesis of the 60S ribosomal subunit. The sequence is that of Ribosome biogenesis protein SSF1 (SSF1) from Saccharomyces cerevisiae (strain ATCC 204508 / S288c) (Baker's yeast).